The chain runs to 548 residues: uncharacterized protein (548 aa).

2 short-chain dehydrogenase/reductase regions span residues 1–250 (MDDR…WMSV) and 271–548 (PVED…LLSP). An NADP(+)-binding site is contributed by 12-37 (IVVTGAAGGIGRALVDIFAANGDVVV). Residue serine 141 coordinates substrate. Tyrosine 154 (proton acceptor) is an active-site residue. 280 to 304 (VIVMGGATGVGAAIARRFAENGDTV) is an NADP(+) binding site. The active-site Proton acceptor is the tyrosine 420.

This sequence belongs to the short-chain dehydrogenases/reductases (SDR) family.

This is an uncharacterized protein from Sinorhizobium fredii (strain NBRC 101917 / NGR234).